The sequence spans 201 residues: Diadenylate cyclase CdaS (201 aa).

The DAC domain maps to 54 to 201; that stretch reads QTLAATYYIQ…LNGILYTISL (148 aa).

Belongs to the adenylate cyclase family. DacB/CdaS subfamily. In terms of assembly, probably forms a homohexamer. Requires Mg(2+) as cofactor.

It catalyses the reaction 2 ATP = 3',3'-c-di-AMP + 2 diphosphate. Its function is as follows. One of 3 paralogous diadenylate cyclases (DAC) in this bacteria catalyzing the condensation of 2 ATP molecules into cyclic di-AMP (c-di-AMP). It has slow DAC activity with ADP as a substrate and may have weak ADPase activity. Required for efficient spore formation, whereas in B.subtilis, it is required for efficient spore germination. It is produced under the control of different sigma factors in the two bacteria. It is also required for parasporal crystal formation. This Bacillus thuringiensis (strain BMB171) protein is Diadenylate cyclase CdaS.